Consider the following 258-residue polypeptide: Mediator of RNA polymerase II transcription subunit 4 (258 aa).

A coiled-coil region spans residues 52–101 (FRKMLELAEEQAKVEEAMDQLRAKVEVHDREIQKLQKSLKDAELILSTAI). 2 disordered regions span residues 164–208 (GKSE…EVPN) and 234–258 (LETR…SDSQ). Polar residues predominate over residues 166–190 (SEQNINGGTVTHQNSGMPSEQQRTL). Residues 194 to 204 (AGSGSGSGAGG) show a composition bias toward gly residues. Low complexity predominate over residues 246–258 (STDSSSSSSSDSQ).

The protein belongs to the Mediator complex subunit 4 family. Component of the Mediator complex, which includes at least MED4, MED6, MED14, MED17, MED18, MED20, MED21, MED23, MED24, MED27, MED30 and MED31. Interacts with MED10 and MED21.

The protein localises to the nucleus. Its function is as follows. Component of the Mediator complex, a coactivator involved in the regulated transcription of nearly all RNA polymerase II-dependent genes. Mediator functions as a bridge to convey information from gene-specific regulatory proteins to the basal RNA polymerase II transcription machinery. Mediator is recruited to promoters by direct interactions with regulatory proteins and serves as a scaffold for the assembly of a functional preinitiation complex with RNA polymerase II and the general transcription factors. Required for activated transcription of the MtnA, MtnB and MtnD genes. This Drosophila melanogaster (Fruit fly) protein is Mediator of RNA polymerase II transcription subunit 4 (MED4).